The chain runs to 350 residues: S-adenosylmethionine:tRNA ribosyltransferase-isomerase (350 aa).

Belongs to the QueA family. Monomer.

The protein resides in the cytoplasm. It carries out the reaction 7-aminomethyl-7-carbaguanosine(34) in tRNA + S-adenosyl-L-methionine = epoxyqueuosine(34) in tRNA + adenine + L-methionine + 2 H(+). It functions in the pathway tRNA modification; tRNA-queuosine biosynthesis. In terms of biological role, transfers and isomerizes the ribose moiety from AdoMet to the 7-aminomethyl group of 7-deazaguanine (preQ1-tRNA) to give epoxyqueuosine (oQ-tRNA). The polypeptide is S-adenosylmethionine:tRNA ribosyltransferase-isomerase (Vibrio vulnificus (strain CMCP6)).